The sequence spans 493 residues: Maintenance of mitochondrial morphology protein 1 (493 aa).

Over 1–23 (MSQHSQYGVPGVPAQSSLSFTQG) the chain is Lumenal. The helical transmembrane segment at 24–44 (FLLGQLSVVLLIGAFIKFFIF) threads the bilayer. Residues 45 to 493 (GEAPAPPSRG…GSMPRVVRTP (449 aa)) are Cytoplasmic-facing. Residues 52 to 104 (SRGLASRTASHHRSYSINQGDNNANNNTNNGSSPRTLREKPSTSNVLRPVPSS) are disordered. Low complexity predominate over residues 69 to 81 (NQGDNNANNNTNN). The segment covering 93–104 (STSNVLRPVPSS) has biased composition (polar residues). Residues 140-391 (QPESLDWFNV…EPRVQVVGLP (252 aa)) form the SMP-LTD domain. The disordered stretch occupies residues 420–493 (SSRSGGGPVE…GSMPRVVRTP (74 aa)).

The protein belongs to the MMM1 family. As to quaternary structure, homodimer. Component of the ER-mitochondria encounter structure (ERMES) or MDM complex, composed of mmm1, mdm10, mdm12 and mdm34. A mmm1 homodimer associates with one molecule of mdm12 on each side in a pairwise head-to-tail manner, and the SMP-LTD domains of mmm1 and mdm12 generate a continuous hydrophobic tunnel for phospholipid trafficking.

The protein resides in the endoplasmic reticulum membrane. Functionally, component of the ERMES/MDM complex, which serves as a molecular tether to connect the endoplasmic reticulum (ER) and mitochondria. Components of this complex are involved in the control of mitochondrial shape and protein biogenesis, and function in nonvesicular lipid trafficking between the ER and mitochondria. The mdm12-mmm1 subcomplex functions in the major beta-barrel assembly pathway that is responsible for biogenesis of all outer membrane beta-barrel proteins, and acts in a late step after the SAM complex. The mdm10-mdm12-mmm1 subcomplex further acts in the TOM40-specific pathway after the action of the mdm12-mmm1 complex. Essential for establishing and maintaining the structure of mitochondria and maintenance of mtDNA nucleoids. This is Maintenance of mitochondrial morphology protein 1 from Talaromyces stipitatus (strain ATCC 10500 / CBS 375.48 / QM 6759 / NRRL 1006) (Penicillium stipitatum).